The primary structure comprises 941 residues: MTVDYKNTLNLPETSFPMRGDLAKREPDKLKNWYEKNLYQKIRKASKGKKSFILHDGPPYANGNIHIGHAVNKILKDIIIKSKTALGFDSPYIPGWDCHGLPIELKVEGLVGKPNEKISAAEFRQKCREYAAEQVEGQKKDFIRLGVLGDWDNPYLTMNFDTEANIIRTLGKVIENGHLYKGSKPVHWCLDCGSSLAEAEVEYEDKVSPSIYVRFPAESADEIEAKFSAQGRGQGKLSAIIWTTTPWTMPSNRAIAVNADLEYNLVQLGDERVILAAELVESVAKAVGIEHIEILGSVKGDDLELSRFHHPFYDFTVPVILGDHVTTDGGTGLVHTAPDHGLDDFIVGKQYDLPMAGLVSNDGKFISTTEFFAGKGVFEANPLVIEKLQEVGNLLKVEKIKHSYPHCWRHKTPIIFRATPQWFIGMETQGLRQQALGEIKQVRWIPDWGQARIEKMVENRPDWCISRQRTWGVPMTLFVHKETEELHPRTLDLLEEVAKRVERAGIQAWWDLDEKELLGADAETYRKVPDTLDVWFDSGSTYSSVVANRLEFNGQDIDMYLEGSDQHRGWFMSSLMLSTATDSKAPYKQVLTHGFTVDGQGRKMSKSIGNIVTPQEVMDKFGGDILRLWVASTDYTGEMTVSDEILKRAADSYRRIRNTARFLLANLNGFDPKRDLVKPEKMISLDRWAVACALDAQNEIKDAYDNYQFHTVVQRLMRFCSVEMGSFYLDIIKDRQYTTKADSLARRSCQTALWHIAEALVRWMAPILSFTADEIWQHLPQTESARAEFVFTEEFYQGLFGLGEDEKLDDAYWQQLIKVRSEVNRVLEISRNNKEIGGGLEAEVTVYANDEYRALLAQLGNELRFVLITSKVDVKSLSEKPADLADSELEGIAVSVTRSNAEKCPRCWHYSDEIGVSPEHPTLCARCVENVVGNGEVRYFA.

The 'HIGH' region motif lies at 59–69; that stretch reads PYANGNIHIGH. Residue glutamate 562 participates in L-isoleucyl-5'-AMP binding. The short motif at 603–607 is the 'KMSKS' region element; it reads KMSKS. Lysine 606 is an ATP binding site. Residues cysteine 904, cysteine 907, cysteine 924, and cysteine 927 each contribute to the Zn(2+) site.

The protein belongs to the class-I aminoacyl-tRNA synthetase family. IleS type 1 subfamily. Monomer. The cofactor is Zn(2+).

It localises to the cytoplasm. It catalyses the reaction tRNA(Ile) + L-isoleucine + ATP = L-isoleucyl-tRNA(Ile) + AMP + diphosphate. Catalyzes the attachment of isoleucine to tRNA(Ile). As IleRS can inadvertently accommodate and process structurally similar amino acids such as valine, to avoid such errors it has two additional distinct tRNA(Ile)-dependent editing activities. One activity is designated as 'pretransfer' editing and involves the hydrolysis of activated Val-AMP. The other activity is designated 'posttransfer' editing and involves deacylation of mischarged Val-tRNA(Ile). The protein is Isoleucine--tRNA ligase of Haemophilus influenzae (strain ATCC 51907 / DSM 11121 / KW20 / Rd).